The primary structure comprises 844 residues: DNA mismatch repair protein MutS (844 aa).

610 to 617 serves as a coordination point for ATP; sequence GPNMGGKS.

It belongs to the DNA mismatch repair MutS family.

Functionally, this protein is involved in the repair of mismatches in DNA. It is possible that it carries out the mismatch recognition step. This protein has a weak ATPase activity. The sequence is that of DNA mismatch repair protein MutS from Francisella tularensis subsp. novicida (strain U112).